A 274-amino-acid polypeptide reads, in one-letter code: 2,3,4,5-tetrahydropyridine-2,6-dicarboxylate N-succinyltransferase (274 aa).

R107 and D144 together coordinate substrate.

This sequence belongs to the transferase hexapeptide repeat family. In terms of assembly, homotrimer.

The protein localises to the cytoplasm. It catalyses the reaction (S)-2,3,4,5-tetrahydrodipicolinate + succinyl-CoA + H2O = (S)-2-succinylamino-6-oxoheptanedioate + CoA. The protein operates within amino-acid biosynthesis; L-lysine biosynthesis via DAP pathway; LL-2,6-diaminopimelate from (S)-tetrahydrodipicolinate (succinylase route): step 1/3. This Cereibacter sphaeroides (strain ATCC 17025 / ATH 2.4.3) (Rhodobacter sphaeroides) protein is 2,3,4,5-tetrahydropyridine-2,6-dicarboxylate N-succinyltransferase.